Consider the following 566-residue polypeptide: Putative ankyrin repeat protein RF_0987 (566 aa).

3 disordered regions span residues 61 to 118 (KKKN…HENS), 276 to 314 (PPVM…SAEI), and 355 to 392 (VNNN…SEST). Basic and acidic residues predominate over residues 78 to 92 (NQEEPKLASQEHTEA). Over residues 101–112 (TGNTALPSVTAS) the composition is skewed to polar residues. Positions 296–308 (TPVTTPSKVVPTT) are enriched in low complexity. The segment covering 365–378 (EKSPPVSSSNVTIQ) has biased composition (polar residues). ANK repeat units follow at residues 506 to 535 (SGET…KIST) and 539 to 566 (ECQY…KGYQ).

The protein is Putative ankyrin repeat protein RF_0987 of Rickettsia felis (strain ATCC VR-1525 / URRWXCal2) (Rickettsia azadi).